Here is a 359-residue protein sequence, read N- to C-terminus: MKPSIYSLTRDELIAWAVERGQKQFRATQIWDWLYKKRVQSFEEMTNISKDFVSILNDSFCVNPLKQRVVQESADGTVKYLFELPDGMLIETVLMRQHYGHSVCVTTQVGCNIGCTFCASGLIKKQRDLNSGEITAQIMLVQKYFDDRKQGERVSHVVVMGIGEPFDNYKNVMCFLRVINDDNGLAIGARHITVSTSGLAHKIRDFANEGVQVNLAVSLHAPNNDLRSRIMRVNRSFPLEKLFSAIEYYIEKTNRRVTFEYIMLNEVNDSIKQAQELADLTKTIRKLSYVNLIPYNPVSEHDQYSRSPKERVLAFYDVLKKNGVNCVVRQEHGTDIDAACGQLRSKTMKKDREKVTATK.

The active-site Proton acceptor is E91. In terms of domain architecture, Radical SAM core spans 97–329 (QHYGHSVCVT…KKNGVNCVVR (233 aa)). A disulfide bridge connects residues C104 and C340. Residues C111, C115, and C118 each contribute to the [4Fe-4S] cluster site. S-adenosyl-L-methionine is bound by residues 163–164 (GE), S195, 218–220 (SLH), and N296. C340 (S-methylcysteine intermediate) is an active-site residue.

It belongs to the radical SAM superfamily. RlmN family. [4Fe-4S] cluster is required as a cofactor.

Its subcellular location is the cytoplasm. The catalysed reaction is adenosine(2503) in 23S rRNA + 2 reduced [2Fe-2S]-[ferredoxin] + 2 S-adenosyl-L-methionine = 2-methyladenosine(2503) in 23S rRNA + 5'-deoxyadenosine + L-methionine + 2 oxidized [2Fe-2S]-[ferredoxin] + S-adenosyl-L-homocysteine. It carries out the reaction adenosine(37) in tRNA + 2 reduced [2Fe-2S]-[ferredoxin] + 2 S-adenosyl-L-methionine = 2-methyladenosine(37) in tRNA + 5'-deoxyadenosine + L-methionine + 2 oxidized [2Fe-2S]-[ferredoxin] + S-adenosyl-L-homocysteine. Functionally, specifically methylates position 2 of adenine 2503 in 23S rRNA and position 2 of adenine 37 in tRNAs. The sequence is that of Probable dual-specificity RNA methyltransferase RlmN from Streptococcus pyogenes serotype M5 (strain Manfredo).